Reading from the N-terminus, the 331-residue chain is Bifunctional nuclease 1 (331 aa).

Residues 126 to 261 (CVQNNPRVLR…RIAYNNGLKV (136 aa)) form the BFN domain. In terms of domain architecture, UVR spans 291–326 (EAQEFDLVRNMLVAAVEERYKDAAQYRDQLFMFRAK).

The protein belongs to the bifunctional nuclease family.

It is found in the nucleus. Bifunctional nuclease with both RNase and DNase activities. Involved in basal defense response. Participates in abscisic acid-derived callose deposition following infection by a necrotrophic pathogen. The polypeptide is Bifunctional nuclease 1 (BBD1) (Oryza sativa subsp. japonica (Rice)).